The chain runs to 437 residues: Probable exopolygalacturonase C (437 aa).

Residues 1 to 21 (MLITKTAFLAFLLSSVPLAHG) form the signal peptide. Asn-25, Asn-42, Asn-82, Asn-99, and Asn-149 each carry an N-linked (GlcNAc...) asparagine glycan. PbH1 repeat units follow at residues 215–236 (GTNIRISDSIMYNGDDAIAVGS) and 238–259 (SHNIVFERNTIGYQSHGMSIGS). Asp-229 (proton donor) is an active-site residue. His-253 is a catalytic residue. Asn-269 carries an N-linked (GlcNAc...) asparagine glycan. PbH1 repeat units follow at residues 270–291 (ITNLRFEDVTVIDALYAARFKS) and 299–320 (VKNVTWKNIRVYNVTFPIFVTQ). N-linked (GlcNAc...) asparagine glycans are attached at residues Asn-301 and Asn-311. Cys-386 and Cys-392 are disulfide-bonded. 2 N-linked (GlcNAc...) asparagine glycosylation sites follow: Asn-428 and Asn-431.

The protein belongs to the glycosyl hydrolase 28 family.

The protein resides in the secreted. The catalysed reaction is [(1-&gt;4)-alpha-D-galacturonosyl](n) + H2O = alpha-D-galacturonate + [(1-&gt;4)-alpha-D-galacturonosyl](n-1). In terms of biological role, specific in hydrolyzing the terminal glycosidic bond of polygalacturonic acid and oligogalacturonates. The sequence is that of Probable exopolygalacturonase C (pgxC) from Aspergillus flavus (strain ATCC 200026 / FGSC A1120 / IAM 13836 / NRRL 3357 / JCM 12722 / SRRC 167).